Consider the following 652-residue polypeptide: Putative glycine--tRNA ligase (652 aa).

A disordered region spans residues 119–145 (GDKEARGQNSNDQPEESDDKKKRKKKV). A glycine-binding site is contributed by Glu-221. Residues 253 to 255 (RNE) and 264 to 265 (RV) contribute to the ATP site. Glu-272 contacts glycine. 380-381 (EC) is an ATP binding site. Position 499–501 (499–501 (EPS)) interacts with glycine. Arg-506 is an ATP binding site.

It belongs to the class-II aminoacyl-tRNA synthetase family. As to quaternary structure, homodimer.

The protein resides in the cytoplasm. It carries out the reaction tRNA(Gly) + glycine + ATP = glycyl-tRNA(Gly) + AMP + diphosphate. The catalysed reaction is 2 ATP + H(+) = P(1),P(4)-bis(5'-adenosyl) tetraphosphate + diphosphate. Catalyzes the ATP-dependent ligation of glycine to the 3'-end of its cognate tRNA, via the formation of an aminoacyl-adenylate intermediate (Gly-AMP). Also produces diadenosine tetraphosphate (Ap4A), a universal pleiotropic signaling molecule needed for cell regulation pathways, by direct condensation of 2 ATPs. Thereby, may play a special role in Ap4A homeostasis. This chain is Putative glycine--tRNA ligase (grs1), found in Schizosaccharomyces pombe (strain 972 / ATCC 24843) (Fission yeast).